The sequence spans 371 residues: Palmitoyl-monogalactosyldiacylglycerol delta-7 desaturase, chloroplastic (371 aa).

A chloroplast-targeting transit peptide spans 1–67; it reads MASLLTKPKP…KGLKRDVTTA (67 aa). Transmembrane regions (helical) follow at residues 103–123 and 127–147; these read FGAVAVVLSMHLLSLLAPFQF and AVSVAFGLYIVTGLLGITLSF. The Histidine box-1 signature appears at 148 to 153; the sequence is HRNLSH. Positions 185–189 match the Histidine box-2 motif; that stretch reads HRYHH. A helical membrane pass occupies residues 251–271; the sequence is ALAVALYAMGGFPFIVWGMGV. The Histidine box-3 signature appears at 317–321; the sequence is HNNHH.

It belongs to the fatty acid desaturase type 1 family. Fe(2+) is required as a cofactor. In terms of tissue distribution, highly expressed in young leaves. Low expression in roots.

The protein resides in the plastid. Its subcellular location is the chloroplast membrane. The enzyme catalyses a 1-acyl-2-hexadecanoyl-glycerolipid + 2 reduced [2Fe-2S]-[ferredoxin] + O2 + 2 H(+) = a 1-acyl-2-[(7Z)-hexadecenoyl]-glycerolipid + 2 oxidized [2Fe-2S]-[ferredoxin] + 2 H2O. The protein operates within lipid metabolism; oxylipin biosynthesis. It functions in the pathway lipid metabolism; polyunsaturated fatty acid biosynthesis. In terms of biological role, fatty acid desaturase involved in the first desaturation step leading to the formation of hexadeca 7,10,13-trienoic acid (16:3(7Z,10Z,13Z)), the major functional components of thylakoid membranes. Required for chloroplast biogenesis at low temperature. Also indirectly involved in the production of the oxylipin dinor-oxo-phyto-dienoic acid implicated in wound signaling. In Arabidopsis thaliana (Mouse-ear cress), this protein is Palmitoyl-monogalactosyldiacylglycerol delta-7 desaturase, chloroplastic.